We begin with the raw amino-acid sequence, 178 residues long: Large ribosomal subunit protein uL6 (178 aa).

Basic and acidic residues predominate over residues 155–169; sequence PYKGKGIKYDNEQIR. The tract at residues 155–178 is disordered; that stretch reads PYKGKGIKYDNEQIRRKAGKSGGK.

It belongs to the universal ribosomal protein uL6 family. In terms of assembly, part of the 50S ribosomal subunit.

This protein binds to the 23S rRNA, and is important in its secondary structure. It is located near the subunit interface in the base of the L7/L12 stalk, and near the tRNA binding site of the peptidyltransferase center. This Nitratidesulfovibrio vulgaris (strain DSM 19637 / Miyazaki F) (Desulfovibrio vulgaris) protein is Large ribosomal subunit protein uL6.